A 700-amino-acid polypeptide reads, in one-letter code: Elongation factor G (700 aa).

The tr-type G domain maps to 8-290 (ERYRNIGISA…AVIDYLPSPV (283 aa)). GTP is bound by residues 17–24 (AHIDAGKT), 88–92 (DTPGH), and 142–145 (NKMD).

The protein belongs to the TRAFAC class translation factor GTPase superfamily. Classic translation factor GTPase family. EF-G/EF-2 subfamily.

It is found in the cytoplasm. Catalyzes the GTP-dependent ribosomal translocation step during translation elongation. During this step, the ribosome changes from the pre-translocational (PRE) to the post-translocational (POST) state as the newly formed A-site-bound peptidyl-tRNA and P-site-bound deacylated tRNA move to the P and E sites, respectively. Catalyzes the coordinated movement of the two tRNA molecules, the mRNA and conformational changes in the ribosome. In Paracidovorax citrulli (strain AAC00-1) (Acidovorax citrulli), this protein is Elongation factor G.